We begin with the raw amino-acid sequence, 553 residues long: MRAPGRPALRPLPLPPLLLLLLAAPWGRAVPCVSGGLPKPANITFLSINMKNVLQWTPPEGLQGVKVTYTVQYFIYGQKKWLNKSECRNINRTYCDLSAETSDYEHQYYAKVKAIWGTKCSKWAESGRFYPFLETQIGPPEVALTTDEKSISVVLTAPEKWKRNPEDLPVSMQQIYSNLKYNVSVLNTKSNRTWSQCVTNHTLVLTWLEPNTLYCVHVESFVPGPPRRAQPSEKQCARTLKDQSSEFKAKIIFWYVLPVSITVFLFSVMGYSIYRYIHVGKEKHPANLILIYGNEFDKRFFVPAEKIVINFITLNISDDSKISHQDMSLLGKSSDVSSLNDPQPSGNLRPPQEEEEVKHLGYASHLMEIFCDSEENTEGTSLTQQESLSRTIPPDKTVIEYEYDVRTTDICAGPEEQELSLQEEVSTQGTLLESQAALAVLGPQTLQYSYTPQLQDLDPLAQEHTDSEEGPEEEPSTTLVDWDPQTGRLCIPSLSSFDQDSEGCEPSEGDGLGEEGLLSRLYEEPAPDRPPGENETYLMQFMEEWGLYVQMEN.

The signal sequence occupies residues 1–29 (MRAPGRPALRPLPLPPLLLLLLAAPWGRA). Residues 30–250 (VPCVSGGLPK…KDQSSEFKAK (221 aa)) are Extracellular-facing. Fibronectin type-III domains follow at residues 37–135 (LPKP…FLET) and 136–242 (QIGP…TLKD). Residues asparagine 42, asparagine 83, asparagine 91, asparagine 182, asparagine 191, and asparagine 200 are each glycosylated (N-linked (GlcNAc...) asparagine). Residues cysteine 87 and cysteine 95 are joined by a disulfide bond. A disulfide bond links cysteine 215 and cysteine 236. The helical transmembrane segment at 251 to 271 (IIFWYVLPVSITVFLFSVMGY) threads the bilayer. The Cytoplasmic segment spans residues 272–553 (SIYRYIHVGK…EWGLYVQMEN (282 aa)). 2 disordered regions span residues 333–353 (SSDVSSLNDPQPSGNLRPPQE) and 462–515 (QEHT…LGEE). A compositionally biased stretch (polar residues) spans 334-346 (SDVSSLNDPQPSG). Over residues 499–513 (QDSEGCEPSEGDGLG) the composition is skewed to acidic residues.

Belongs to the type II cytokine receptor family. As to quaternary structure, heterodimer with IL20RB and heterodimer with IL10RB. In terms of tissue distribution, widely expressed with highest levels in skin and testis and high levels in brain. Highly expressed in psoriatic skin.

The protein resides in the membrane. Its function is as follows. The IL20RA/IL20RB dimer is a receptor for IL19, IL20 and IL24. The IL20RA/IL10RB dimer is a receptor for IL26. The polypeptide is Interleukin-20 receptor subunit alpha (IL20RA) (Homo sapiens (Human)).